The following is a 102-amino-acid chain: uncharacterized protein (102 aa).

2 helical membrane passes run 33–55 (VLEL…LVVL) and 57–79 (VVGV…VVVA).

Its subcellular location is the membrane. This is an uncharacterized protein from Saccharomyces cerevisiae (strain ATCC 204508 / S288c) (Baker's yeast).